Here is a 294-residue protein sequence, read N- to C-terminus: tRNA pseudouridine synthase B (294 aa).

Aspartate 39 acts as the Nucleophile in catalysis.

The protein belongs to the pseudouridine synthase TruB family. Type 1 subfamily.

It carries out the reaction uridine(55) in tRNA = pseudouridine(55) in tRNA. Responsible for synthesis of pseudouridine from uracil-55 in the psi GC loop of transfer RNAs. This is tRNA pseudouridine synthase B from Streptococcus pyogenes serotype M5 (strain Manfredo).